The sequence spans 135 residues: C-type lectin Cal (135 aa).

4 disulfides stabilise this stretch: cysteine 3–cysteine 14, cysteine 31–cysteine 131, cysteine 38–cysteine 133, and cysteine 106–cysteine 123. The region spanning 10–132 (MNGLCYKIFN…CESKDAFLCQ (123 aa)) is the C-type lectin domain. Ca(2+) is bound by residues glutamine 96, aspartate 98, glutamate 104, asparagine 119, and aspartate 120. The Galactose-binding signature appears at 96–98 (QPD).

It belongs to the true venom lectin family. As to quaternary structure, homodecamer of disulfide-linked dimers arranged in two pseudo-5-fold symmetric pentamers. As to expression, expressed by the venom gland.

The protein localises to the secreted. Galactose-binding protein which recognizes specific carbohydrate structures and agglutinates a variety of animal cells by binding to cell-surface glycoproteins and glycolipids. Calcium-dependent lectin. Shows high hemagglutinating activity (MHC=10 ng/ml). The polypeptide is C-type lectin Cal (Crotalus atrox (Western diamondback rattlesnake)).